The following is a 1114-amino-acid chain: Constitutive coactivator of PPAR-gamma-like protein 1 (1114 aa).

An interaction with YES1, SRC and FYN region spans residues 339 to 402 (PPHYLARPNP…YNLAEPALTL (64 aa)). Disordered stretches follow at residues 372 to 396 (QAKPVAPQVPSPGAPGQGPHPYNLA) and 411 to 519 (EQNY…GNQI). Residues 431 to 443 (SPINPAPSGSPNH) are compositionally biased toward polar residues. Residues 477–498 (GWEKTGSHSEPQARGDPGDQTK) show a composition bias toward basic and acidic residues. A compositionally biased stretch (polar residues) spans 499–510 (AEGSSTASSGSQ). T651 carries the post-translational modification Phosphothreonine. Residues 825–1114 (AEQAAKVEKM…LEAAVLKKEE (290 aa)) are RNA binding. R869, R880, and R882 each carry omega-N-methylarginine. The interval 918 to 940 (FSGSDSSRTSKSQGGIQPIPSQG) is disordered. Residue K928 is modified to N6-acetyllysine. Residues 929-940 (SQGGIQPIPSQG) show a composition bias toward low complexity. S956 carries the phosphoserine modification. An omega-N-methylarginine mark is found at R978 and R982. A disordered region spans residues 1009-1099 (AIQGKPPYAA…LNALSTDSGC (91 aa)). At S1019 the chain carries Phosphoserine. The segment covering 1022–1033 (EVAKELKSRSGE) has biased composition (basic and acidic residues). The span at 1034–1043 (SKSSAMSSDG) shows a compositional bias: polar residues. Phosphoserine is present on residues S1040, S1041, and S1044. Polar residues predominate over residues 1060-1097 (MNGSAGDTRAPSHSESALNNDSKTCNTNPHLNALSTDS).

This sequence belongs to the constitutive coactivator of PPAR-gamma family. Interacts with PURA. Interacts with YES1, SRC, FYN. Upon tyrosine phosphorylation, interacts with PIK3R1. Post-translationally, arg-978 is dimethylated, probably to asymmetric dimethylarginine. In terms of processing, phosphorylated on tyrosine by src family kinases upon ultraviolet exposure.

Its subcellular location is the cytoplasm. It is found in the cell membrane. In terms of biological role, component of the oxidative stress-induced survival signaling. May regulate the activation of SRC family protein kinases. May act as a scaffolding protein enabling SRC family protein kinases to phosphorylate and activate PI3-kinase. Binds IGF2 RNA and promotes the production of IGF2 protein. In Bos taurus (Bovine), this protein is Constitutive coactivator of PPAR-gamma-like protein 1 (FAM120A).